An 822-amino-acid chain; its full sequence is Integrator complex assembly factor BRAT1 (822 aa).

Positions 100–200 are required for interaction with NDFIP1; that stretch reads LGLFGESGAP…WPMCAQKIVN (101 aa). HEAT repeat units follow at residues 495 to 531 and 544 to 576; these read LLFL…IRHW and SEVP…SSQG. Serine 743 bears the Phosphoserine mark. The BRAT1-like motif motif lies at 820 to 822; that stretch reads DCY. Cysteine 821 contacts Zn(2+).

It belongs to the BRAT1 family. In terms of assembly, part of the multiprotein complex composed of BRAT1, WDR73, as well as integrator complex subunits INTS9 and INTS11. Interacts with BRCA1 and ATM. Interacts with MTOR and RPTOR. Interacts with NDFIP1. Interacts with SMC1A and PRKDC. In terms of processing, ubiquitinated by NEDD4, NEDD4L and ITCH; mono- and polyubiquitinated forms are detected. High levels detected in the cortex and much lower levels detected in the cerebellum, spinal cord and lung (at protein level).

It is found in the nucleus. It localises to the cytoplasm. Its function is as follows. Component of a multiprotein complex required for the assembly of the RNA endonuclease module of the integrator complex. Associates with INTS9 and INTS11 in the cytoplasm and blocks the active site of INTS11 to inhibit the endonuclease activity of INTS11 before formation of the full integrator complex. Following dissociation of WDR73 of the complex, BRAT1 facilitates the nuclear import of the INTS9-INTS11 heterodimer. In the nucleus, INTS4 is integrated to the INTS9-INTS11 heterodimer and BRAT1 is released from the mature RNA endonuclease module by inositol hexakisphosphate (InsP6). BRAT1 is also involved in DNA damage response; activates kinases ATM, SMC1A and PRKDC by modulating their phosphorylation status following ionizing radiation (IR) stress. Plays a role in regulating mitochondrial function and cell proliferation. Required for protein stability of MTOR and MTOR-related proteins, and cell cycle progress by growth factors. This Mus musculus (Mouse) protein is Integrator complex assembly factor BRAT1.